Here is a 160-residue protein sequence, read N- to C-terminus: Putative antiporter subunit mnhE2 (160 aa).

A run of 3 helical transmembrane segments spans residues 23–43 (FKFTTFFAGFLIGLIVIYILH), 55–75 (IWVAIKFLAVYLYQLITSSIS), and 100–120 (SNWAITFLTILIIITPGSTVI).

Belongs to the CPA3 antiporters (TC 2.A.63) subunit E family. As to quaternary structure, may form a heterooligomeric complex that consists of seven subunits: mnhA2, mnhB2, mnhC2, mnhD2, mnhE2, mnhF2 and mnhG2.

Its subcellular location is the cell membrane. The polypeptide is Putative antiporter subunit mnhE2 (mnhE2) (Staphylococcus epidermidis (strain ATCC 35984 / DSM 28319 / BCRC 17069 / CCUG 31568 / BM 3577 / RP62A)).